A 207-amino-acid polypeptide reads, in one-letter code: Protein N-terminal glutamine amidohydrolase (207 aa).

Residues Cys30, His83, and Asp99 contribute to the active site.

This sequence belongs to the NTAQ1 family. As to quaternary structure, monomer.

The protein localises to the cytoplasm. The protein resides in the cytosol. It is found in the nucleus. It catalyses the reaction N-terminal L-glutaminyl-[protein] + H2O = N-terminal L-glutamyl-[protein] + NH4(+). Functionally, mediates the side-chain deamidation of N-terminal glutamine residues to glutamate, an important step in N-end rule pathway of protein degradation. Conversion of the resulting N-terminal glutamine to glutamate renders the protein susceptible to arginylation, polyubiquitination and degradation as specified by the N-end rule. Does not act on substrates with internal or C-terminal glutamine and does not act on non-glutamine residues in any position. Does not deaminate acetylated N-terminal glutamine. With the exception of proline, all tested second-position residues on substrate peptides do not greatly influence the activity. In contrast, a proline at position 2, virtually abolishes deamidation of N-terminal glutamine. This is Protein N-terminal glutamine amidohydrolase (Ntaq1) from Rattus norvegicus (Rat).